Here is a 244-residue protein sequence, read N- to C-terminus: 2-C-methyl-D-erythritol 4-phosphate cytidylyltransferase (244 aa).

Belongs to the IspD/TarI cytidylyltransferase family. IspD subfamily.

It carries out the reaction 2-C-methyl-D-erythritol 4-phosphate + CTP + H(+) = 4-CDP-2-C-methyl-D-erythritol + diphosphate. The protein operates within isoprenoid biosynthesis; isopentenyl diphosphate biosynthesis via DXP pathway; isopentenyl diphosphate from 1-deoxy-D-xylulose 5-phosphate: step 2/6. Its function is as follows. Catalyzes the formation of 4-diphosphocytidyl-2-C-methyl-D-erythritol from CTP and 2-C-methyl-D-erythritol 4-phosphate (MEP). This Solibacter usitatus (strain Ellin6076) protein is 2-C-methyl-D-erythritol 4-phosphate cytidylyltransferase.